The following is a 410-amino-acid chain: MSLCTLEINLSAIKANYRLLKNICENSVDFLHNVANKEEFAGNTSPRTAAYTLVREDASLGSTPKLPLGASYAKNLLVGAAVKANSYGLGAIEISKTLLEENCRYFFVASSNEGISLRKAIGDEVNILILNGVFEHDALELIEYNLIPVLNNLNQIKIWQKFSNLKNQLLPCYLHFNTGINRLGLNHNEIEQLINNRDLLKGLNVEYIISHLSASEDSDNPYNLEQLNKFKAYLEYFPNAKASLANSGGIFLGKDYHFNLVRPGAALYGLNPLGSNKPNPMQNPVTLKAPIIHLQNLTYGSRIGYNMTFTTKRDSLIATLPFGYADGFSRNFSNQGTVFINSRNVPIIGRISMDLVNIDVTDLPPSDIFLGQEVEIIGNNCTPDKIADIIGTIGYEILTSLGNRYKRIYT.

Residues V28–L76 enclose the RPE1 insert domain. K83 (proton acceptor; specific for D-alanine) is an active-site residue. K83 is modified (N6-(pyridoxal phosphate)lysine). R182 is a substrate binding site. The Proton acceptor; specific for L-alanine role is filled by Y305. M353 provides a ligand contact to substrate.

Belongs to the alanine racemase family. The cofactor is pyridoxal 5'-phosphate.

The enzyme catalyses L-alanine = D-alanine. The protein operates within amino-acid biosynthesis; D-alanine biosynthesis; D-alanine from L-alanine: step 1/1. Catalyzes the interconversion of L-alanine and D-alanine. May also act on other amino acids. The sequence is that of Alanine racemase (alr) from Rickettsia bellii (strain RML369-C).